The primary structure comprises 424 residues: Arogenate dehydratase 4, chloroplastic (424 aa).

The N-terminal 34 residues, 1 to 34 (MQAATSCDLKFRSTDPTSRNKCFSHAIPKRVAVT), are a transit peptide targeting the chloroplast. Residues 126–303 (RVAYQGVPGA…NVTRFLMLAR (178 aa)) form the Prephenate dehydratase domain. The ACT domain occupies 319–410 (VFAAQEHKGT…SFLRVLGSYP (92 aa)).

In terms of tissue distribution, expressed in roots, leaves, stems, flowers and siliques. More abundant in stems and roots.

Its subcellular location is the plastid. It is found in the chloroplast stroma. It carries out the reaction L-arogenate + H(+) = L-phenylalanine + CO2 + H2O. It functions in the pathway amino-acid biosynthesis; L-phenylalanine biosynthesis; L-phenylalanine from L-arogenate: step 1/1. Converts the prephenate produced from the shikimate-chorismate pathway into phenylalanine. In Arabidopsis thaliana (Mouse-ear cress), this protein is Arogenate dehydratase 4, chloroplastic.